The chain runs to 113 residues: Dynein light chain Tctex-type 1 (113 aa).

At Met1 the chain carries N-acetylmethionine. Residues 41-113 (QWTTNVVEQT…CIVSAFGLSI (73 aa)) are interaction with GNB1.

It belongs to the dynein light chain Tctex-type family. Homodimer. The cytoplasmic dynein 1 complex consists of two catalytic heavy chains (HCs) and a number of non-catalytic subunits presented by intermediate chains (ICs), light intermediate chains (LICs) and light chains (LCs); the composition seems to vary in respect to the IC, LIC and LC composition. The heavy chain homodimer serves as a scaffold for the probable homodimeric assembly of the non-catalytic subunits. The ICs and LICs bind directly to the HC dimer and the LCs assemble on the IC dimer. DYNLT1 and DYNLT3 compete for association with dynein IC (DYNC1I1 or DYNC1I2). Self-associates. Interacts with RHO. Interacts with DYNC1I1 and DYNC1I2. Interacts with DOC2A, DOC2B and SCN10A. Interacts with PVR. Interacts with SVIL isoform 2. Interacts with GNB1; the interaction occurs in presence of guanine nucleotide-binding protein G(T) subunit gamma; the interaction diminishes the association of DYNLT1 with dynein IC (DYNC1I1 or DYNC1I2). Interacts with GNB2, GNB3 and GNB5; the interactions occur in presence of guanine nucleotide-binding protein G(T) subunit gamma. Interacts with ACVR2B and ARHGEF2. Interacts with DNAI4. Interacts with CFAP61. Post-translationally, phosphorylated by BMPR2. The phosphorylation status is proposed to regulate the association with the cytoplasmic dynein complex and may have role in cytoplasmic dynein cargo release.

The protein resides in the golgi apparatus. The protein localises to the cytoplasm. It is found in the cytoskeleton. It localises to the spindle. Its function is as follows. Acts as one of several non-catalytic accessory components of the cytoplasmic dynein 1 complex that are thought to be involved in linking dynein to cargos and to adapter proteins that regulate dynein function. Cytoplasmic dynein 1 acts as a motor for the intracellular retrograde motility of vesicles and organelles along microtubules. Binds to transport cargos and is involved in apical cargo transport such as rhodopsin-bearing vesicles in polarized epithelia. May also be a accessory component of axonemal dynein. Functionally, plays a role in neuronal morphogenesis; the function is independent of cytoplasmic dynein and seems to be coupled to regulation of the actin cytoskeleton by enhancing Rac1 activity. The function in neurogenesis may be regulated by association with a G-protein beta-gamma dimer. May function as a receptor-independent activator of heterotrimeric G-protein signaling; the activation appears to be independent of a nucleotide exchange. Plays a role in regulating neurogenesis; inhibits the genesis of neurons from precursor cells during cortical development presumably by antagonizing ARHGEF2. Involved in the regulation of mitotic spindle orientation. Unrelated to the role in retrograde microtubule-associated movement may play a role in the dimerization of cytoplasmic proteins/domains such as for ACVR2B. Binds to the cytoplasmic domain of ACVR2B and, in vitro, inhibits ACVR2B signaling. The protein is Dynein light chain Tctex-type 1 (DYNLT1) of Bos taurus (Bovine).